We begin with the raw amino-acid sequence, 341 residues long: Protein RecA, plasmid (341 aa).

80 to 87 provides a ligand contact to ATP; it reads GAESSGKT.

It belongs to the RecA family.

The protein localises to the cytoplasm. In terms of biological role, can catalyze the hydrolysis of ATP in the presence of single-stranded DNA, the ATP-dependent uptake of single-stranded DNA by duplex DNA, and the ATP-dependent hybridization of homologous single-stranded DNAs. It interacts with LexA causing its activation and leading to its autocatalytic cleavage. The protein is Protein RecA, plasmid of Lactococcus lactis subsp. lactis (Streptococcus lactis).